We begin with the raw amino-acid sequence, 123 residues long: Small ribosomal subunit protein uS12 (123 aa).

The disordered stretch occupies residues 1–32 (MPTIQQLVRKGRKDKKAKVKTAALKGSPQRRG). Residues 9-19 (RKGRKDKKAKV) show a composition bias toward basic residues. 3-methylthioaspartic acid is present on D89.

The protein belongs to the universal ribosomal protein uS12 family. In terms of assembly, part of the 30S ribosomal subunit. Contacts proteins S8 and S17. May interact with IF1 in the 30S initiation complex.

With S4 and S5 plays an important role in translational accuracy. In terms of biological role, interacts with and stabilizes bases of the 16S rRNA that are involved in tRNA selection in the A site and with the mRNA backbone. Located at the interface of the 30S and 50S subunits, it traverses the body of the 30S subunit contacting proteins on the other side and probably holding the rRNA structure together. The combined cluster of proteins S8, S12 and S17 appears to hold together the shoulder and platform of the 30S subunit. The polypeptide is Small ribosomal subunit protein uS12 (Corynebacterium kroppenstedtii (strain DSM 44385 / JCM 11950 / CIP 105744 / CCUG 35717)).